Consider the following 354-residue polypeptide: Protein RecA (354 aa).

67–74 serves as a coordination point for ATP; that stretch reads GPESSGKT. Residues 331–354 are disordered; it reads NQDSTPDFSVDDNGEGVKETNEDF. Residues 345–354 are compositionally biased toward basic and acidic residues; it reads EGVKETNEDF.

It belongs to the RecA family.

It localises to the cytoplasm. Functionally, can catalyze the hydrolysis of ATP in the presence of single-stranded DNA, the ATP-dependent uptake of single-stranded DNA by duplex DNA, and the ATP-dependent hybridization of homologous single-stranded DNAs. It interacts with LexA causing its activation and leading to its autocatalytic cleavage. This is Protein RecA from Citrobacter koseri (strain ATCC BAA-895 / CDC 4225-83 / SGSC4696).